Reading from the N-terminus, the 352-residue chain is Heat-inducible transcription repressor HrcA (352 aa).

The protein belongs to the HrcA family.

Negative regulator of class I heat shock genes (grpE-dnaK-dnaJ and groELS operons). Prevents heat-shock induction of these operons. The polypeptide is Heat-inducible transcription repressor HrcA (Ralstonia nicotianae (strain ATCC BAA-1114 / GMI1000) (Ralstonia solanacearum)).